Here is a 243-residue protein sequence, read N- to C-terminus: Venom nerve growth factor 1 (243 aa).

The N-terminal stretch at 1–18 (MSMLCYTLIIAFLIGIWA) is a signal peptide. Positions 19-125 (VPKSEDNAPL…ALNRNIRAKR (107 aa)) are excised as a propeptide. Cystine bridges form between cysteine 139/cysteine 204, cysteine 182/cysteine 232, and cysteine 192/cysteine 234. An N-linked (GlcNAc...) asparagine glycan is attached at asparagine 148.

This sequence belongs to the NGF-beta family. In terms of assembly, homodimer; non-covalently linked. In terms of tissue distribution, expressed by the venom gland.

The protein localises to the secreted. In terms of biological role, nerve growth factor is important for the development and maintenance of the sympathetic and sensory nervous systems. It stimulates division and differentiation of sympathetic and embryonic sensory neurons as well as basal forebrain cholinergic neurons in the brain. Its relevance in the snake venom is not clear. However, it has been shown to inhibit metalloproteinase-dependent proteolysis of platelet glycoprotein Ib alpha, suggesting a metalloproteinase inhibition to prevent metalloprotease autodigestion and/or protection against prey proteases. Binds a lipid between the two protein chains in the homodimer. The lipid-bound form promotes histamine relase from mouse mast cells, contrary to the lipid-free form. The polypeptide is Venom nerve growth factor 1 (Naja sputatrix (Malayan spitting cobra)).